The primary structure comprises 180 residues: Protein SPMIP9 (180 aa).

In terms of assembly, microtubule inner protein component of sperm flagellar doublet microtubules. In terms of tissue distribution, testis-specific. Detected in the germ cell lineage at all stages.

The protein localises to the nucleus. Its subcellular location is the cytoplasm. It is found in the cytoskeleton. The protein resides in the flagellum axoneme. In terms of biological role, microtubule inner protein (MIP) part of the dynein-decorated doublet microtubules (DMTs) in flagella axoneme. The protein is Protein SPMIP9 of Homo sapiens (Human).